We begin with the raw amino-acid sequence, 97 residues long: Glutamyl-tRNA(Gln) amidotransferase subunit C (97 aa).

It belongs to the GatC family. As to quaternary structure, heterotrimer of A, B and C subunits.

The enzyme catalyses L-glutamyl-tRNA(Gln) + L-glutamine + ATP + H2O = L-glutaminyl-tRNA(Gln) + L-glutamate + ADP + phosphate + H(+). The catalysed reaction is L-aspartyl-tRNA(Asn) + L-glutamine + ATP + H2O = L-asparaginyl-tRNA(Asn) + L-glutamate + ADP + phosphate + 2 H(+). In terms of biological role, allows the formation of correctly charged Asn-tRNA(Asn) or Gln-tRNA(Gln) through the transamidation of misacylated Asp-tRNA(Asn) or Glu-tRNA(Gln) in organisms which lack either or both of asparaginyl-tRNA or glutaminyl-tRNA synthetases. The reaction takes place in the presence of glutamine and ATP through an activated phospho-Asp-tRNA(Asn) or phospho-Glu-tRNA(Gln). The sequence is that of Glutamyl-tRNA(Gln) amidotransferase subunit C from Saccharolobus solfataricus (strain ATCC 35092 / DSM 1617 / JCM 11322 / P2) (Sulfolobus solfataricus).